Reading from the N-terminus, the 249-residue chain is Phycobilisome 27.9 kDa linker polypeptide, phycoerythrin-associated, rod (249 aa).

Positions 2 to 166 (ASQTILELWP…LDRGPAQIDS (165 aa)) constitute a PBS-linker domain. In terms of domain architecture, CpcD-like spans 198 to 248 (EKRFKILVQGSKFDSPRRISTTEYIVPASKMTPQIQRINRTSGKIVSITEI).

The protein belongs to the phycobilisome linker protein family. In terms of assembly, the phycobilisome is a hemidiscoidal structure that is composed of two distinct substructures: a core complex and six rods radiating from the core.

It is found in the cellular thylakoid membrane. Rod linker protein, associated with phycoerythrin. Linker polypeptides determine the state of aggregation and the location of the disk-shaped phycobiliprotein units within the phycobilisome and modulate their spectroscopic properties in order to mediate a directed and optimal energy transfer. The protein is Phycobilisome 27.9 kDa linker polypeptide, phycoerythrin-associated, rod (cpeD) of Microchaete diplosiphon (Fremyella diplosiphon).